The primary structure comprises 224 residues: Elongation factor Ts (224 aa).

The tract at residues 81 to 84 (TDFV) is involved in Mg(2+) ion dislocation from EF-Tu.

It belongs to the EF-Ts family.

The protein resides in the cytoplasm. Associates with the EF-Tu.GDP complex and induces the exchange of GDP to GTP. It remains bound to the aminoacyl-tRNA.EF-Tu.GTP complex up to the GTP hydrolysis stage on the ribosome. In Finegoldia magna (strain ATCC 29328 / DSM 20472 / WAL 2508) (Peptostreptococcus magnus), this protein is Elongation factor Ts.